The following is a 100-amino-acid chain: Large ribosomal subunit protein bL21 (100 aa).

It belongs to the bacterial ribosomal protein bL21 family. In terms of assembly, part of the 50S ribosomal subunit. Contacts protein L20.

Its function is as follows. This protein binds to 23S rRNA in the presence of protein L20. The sequence is that of Large ribosomal subunit protein bL21 from Wolbachia sp. subsp. Brugia malayi (strain TRS).